The sequence spans 816 residues: Metabotropic glutamate receptor-like protein E (816 aa).

The first 27 residues, Met-1 to Ser-27, serve as a signal peptide directing secretion. The Extracellular portion of the chain corresponds to Glu-28 to Asn-436. N-linked (GlcNAc...) asparagine glycosylation is found at Asn-68, Asn-311, and Asn-388. A helical transmembrane segment spans residues Ile-437–Ile-457. Topologically, residues Ala-458 to Pro-469 are cytoplasmic. The chain crosses the membrane as a helical span at residues Leu-470–Leu-490. At Pro-491–Pro-496 the chain is on the extracellular side. The helical transmembrane segment at Leu-497 to Phe-517 threads the bilayer. Residues Thr-518–Lys-541 lie on the Cytoplasmic side of the membrane. The chain crosses the membrane as a helical span at residues Phe-542–Thr-562. At Ala-563–Ala-590 the chain is on the extracellular side. The chain crosses the membrane as a helical span at residues Trp-591 to Phe-611. At Lys-612–Pro-625 the chain is on the cytoplasmic side. A helical membrane pass occupies residues Ile-626–Ile-646. At Leu-647–Ala-653 the chain is on the extracellular side. Residues Ile-654–Phe-674 traverse the membrane as a helical segment. The Cytoplasmic segment spans residues Leu-675–Lys-816. The segment at Asp-697–Lys-718 is disordered.

This sequence belongs to the G-protein coupled receptor 3 family.

The protein resides in the membrane. May be involved in early development in cAMP sensing and subsequent chemotactic response. Probable receptor of GABA and glutamate, leading respectively to the induction or inhibition of SDF-2 formation. The sequence is that of Metabotropic glutamate receptor-like protein E (grlE) from Dictyostelium discoideum (Social amoeba).